Consider the following 470-residue polypeptide: Regulator of microtubule dynamics protein 3 (470 aa).

Topologically, residues 1-12 are mitochondrial intermembrane; it reads MSRLGALGGSRA. A helical membrane pass occupies residues 13-35; it reads GLGLLLGTAAGLGFLCVLYSQRW. The Cytoplasmic portion of the chain corresponds to 36–470; it reads KRTQRHGRSH…DLEELEVILG (435 aa). A phosphoserine mark is found at Ser-44, Ser-46, Ser-50, and Ser-57. Residues 91–125 are a coiled coil; it reads LDRLDFVLTSLMALRREVEELQRSLQGLAGEIVGE. Residues 157-163 carry the FFAT motif; the sequence is VYFTASS. A Phosphothreonine modification is found at Thr-160. The segment at 168-205 is disordered; sequence TDAESEGGYTTANAESDYERDSDKESGDAEDEVSCETV. Phosphoserine occurs at positions 183, 193, 212, and 233. Residues 184–194 are compositionally biased toward basic and acidic residues; it reads DYERDSDKESG.

Belongs to the RMDN family. Interacts with PTPN2. Interacts with microtubules. Interacts with VAPB. Interacts (via FFAT motif) with MOSPD2 (via MSP domain). Interacts (via phosphorylated FFAT motif) with MOSPD2, VAPA and VAPB. Phosphorylation at Thr-160 of the FFAT motif activates interaction with MOSPD2, VAPA and VAPB.

It localises to the mitochondrion outer membrane. The protein localises to the cytoplasm. The protein resides in the nucleus. Its subcellular location is the cytoskeleton. It is found in the spindle. It localises to the spindle pole. Its function is as follows. Involved in cellular calcium homeostasis regulation. May participate in differentiation and apoptosis of keratinocytes. Overexpression induces apoptosis. The protein is Regulator of microtubule dynamics protein 3 of Mus musculus (Mouse).